Reading from the N-terminus, the 27-residue chain is Truncated HBeAg protein (27 aa).

The chain is Truncated HBeAg protein (C) from Hepatitis B virus genotype C subtype ayw (isolate Australia/AustRC/1992) (HBV-C).